Here is a 218-residue protein sequence, read N- to C-terminus: Probable 3-keto-L-gulonate-6-phosphate decarboxylase (218 aa).

Asp-11 is a substrate binding site. Mg(2+)-binding residues include Glu-33 and Asp-62. Arg-194 contacts substrate.

Belongs to the HPS/KGPDC family. KGPDC subfamily. Requires Mg(2+) as cofactor.

It catalyses the reaction 3-dehydro-L-gulonate 6-phosphate + H(+) = L-xylulose 5-phosphate + CO2. Its pathway is cofactor degradation; L-ascorbate degradation; D-xylulose 5-phosphate from L-ascorbate: step 2/4. In terms of biological role, catalyzes the decarboxylation of 3-keto-L-gulonate-6-P into L-xylulose-5-P. Is involved in the anaerobic L-ascorbate utilization. The protein is Probable 3-keto-L-gulonate-6-phosphate decarboxylase (ulaD) of Mycoplasma pneumoniae (strain ATCC 29342 / M129 / Subtype 1) (Mycoplasmoides pneumoniae).